A 26-amino-acid polypeptide reads, in one-letter code: Fumarylacetoacetate hydrolase domain-containing protein 2A (26 aa).

Belongs to the FAH family. Ca(2+) is required as a cofactor. Mg(2+) serves as cofactor.

In terms of biological role, may have hydrolase activity. This chain is Fumarylacetoacetate hydrolase domain-containing protein 2A, found in Mesocricetus auratus (Golden hamster).